The primary structure comprises 298 residues: Ethylmalonyl-CoA decarboxylase (298 aa).

This sequence belongs to the enoyl-CoA hydratase/isomerase family.

It is found in the cytoplasm. It localises to the cytosol. The catalysed reaction is (2S)-ethylmalonyl-CoA + H(+) = butanoyl-CoA + CO2. It carries out the reaction (S)-methylmalonyl-CoA + H(+) = propanoyl-CoA + CO2. The enzyme catalyses (2R)-ethylmalonyl-CoA + H(+) = butanoyl-CoA + CO2. Decarboxylates ethylmalonyl-CoA, a potentially toxic metabolite, to form butyryl-CoA, suggesting it might be involved in metabolite proofreading. Acts preferentially on (S)-ethylmalonyl-CoA but also has some activity on the (R)-isomer. Also has methylmalonyl-CoA decarboxylase activity at lower level. This is Ethylmalonyl-CoA decarboxylase (ECHDC1) from Gallus gallus (Chicken).